Here is a 385-residue protein sequence, read N- to C-terminus: 3-hydroxyisobutyryl-CoA hydrolase, mitochondrial (385 aa).

4 residues coordinate substrate: glutamate 120, glycine 145, glutamate 168, and aspartate 176.

Belongs to the enoyl-CoA hydratase/isomerase family.

It is found in the mitochondrion. It carries out the reaction 3-hydroxy-2-methylpropanoyl-CoA + H2O = 3-hydroxy-2-methylpropanoate + CoA + H(+). Its pathway is amino-acid degradation; L-valine degradation. Its function is as follows. Hydrolyzes 3-hydroxyisobutyryl-CoA (HIBYL-CoA), a saline catabolite. Has high activity toward isobutyryl-CoA. Could be an isobutyryl-CoA dehydrogenase that functions in valine catabolism. Also hydrolyzes 3-hydroxypropanoyl-CoA. This Gallus gallus (Chicken) protein is 3-hydroxyisobutyryl-CoA hydrolase, mitochondrial (HIBCH).